Reading from the N-terminus, the 1019-residue chain is DNA topoisomerase 1 (1019 aa).

The tract at residues 1 to 160 (MNSIQVKNEP…KTMSITGSGE (160 aa)) is disordered. Positions 46 to 56 (KPLAKRPKVED) are enriched in basic and acidic residues. Residues 62–78 (PLTSTVSSQNGVQKRSG) show a composition bias toward polar residues. 2 stretches are compositionally biased toward acidic residues: residues 83–93 (DDNDDDSDSDS) and 107–136 (SDDD…DDDD). Interaction with DNA stretches follow at residues 379-380 (KY), 442-447 (RAGNEK), and 556-558 (SAK). Residues 386–860 (TSNFKTNSDR…KKVKKEEEEN (475 aa)) enclose the Topo IB-type catalytic domain. The interval 716–737 (EQKGLTGDDGTPKKGKKAKNVE) is disordered. The O-(3'-phospho-DNA)-tyrosine intermediate role is filled by Y822. Disordered stretches follow at residues 843–890 (GQGK…TGDS) and 940–1019 (MRKL…AAVV). The span at 854–863 (KKEEEENDIK) shows a compositional bias: basic and acidic residues. Basic residues predominate over residues 864–879 (PKKKDAKGAASKKRAA). 2 stretches are compositionally biased toward basic and acidic residues: residues 940–950 (MRKLDSAERKG) and 980–996 (TSAD…VDKT). Over residues 997-1012 (EESDDDLSSDSSDDED) the composition is skewed to acidic residues.

The protein belongs to the type IB topoisomerase family. Monomer.

It catalyses the reaction ATP-independent breakage of single-stranded DNA, followed by passage and rejoining.. Releases the supercoiling and torsional tension of DNA introduced during the DNA replication and transcription by transiently cleaving and rejoining one strand of the DNA duplex. Introduces a single-strand break via transesterification at a target site in duplex DNA. The scissile phosphodiester is attacked by the catalytic tyrosine of the enzyme, resulting in the formation of a DNA-(3'-phosphotyrosyl)-enzyme intermediate and the expulsion of a 5'-OH DNA strand. The free DNA strand then rotates around the intact phosphodiester bond on the opposing strand, thus removing DNA supercoils. Finally, in the religation step, the DNA 5'-OH attacks the covalent intermediate to expel the active-site tyrosine and restore the DNA phosphodiester backbone. This Mycosarcoma maydis (Corn smut fungus) protein is DNA topoisomerase 1 (TOP1).